Here is a 328-residue protein sequence, read N- to C-terminus: Malate dehydrogenase (328 aa).

Position 11–17 (11–17) interacts with NAD(+); it reads GAAGQIG. 2 residues coordinate substrate: Arg-94 and Arg-100. NAD(+) contacts are provided by residues Asn-107, Gln-114, and 131–133; that span reads VGN. 2 residues coordinate substrate: Asn-133 and Arg-164. Catalysis depends on His-189, which acts as the Proton acceptor.

The protein belongs to the LDH/MDH superfamily. MDH type 2 family.

The catalysed reaction is (S)-malate + NAD(+) = oxaloacetate + NADH + H(+). Functionally, catalyzes the reversible oxidation of malate to oxaloacetate. This is Malate dehydrogenase from Acinetobacter baumannii (strain SDF).